A 284-amino-acid chain; its full sequence is Sulfotransferase 4A1 (284 aa).

Residues T8, T11, and T205 each carry the phosphothreonine modification.

Belongs to the sulfotransferase 1 family. Highly expressed in the cerebral cortex and frontal lobe, slightly less in the cerebellum, occipital and temporal lobes, relatively low in the medulla and putamen, and lowest in the spinal cord. No expression detected in the pancreas. Highly expressed in fetal brain and occipital lobe, slightly less in the whole brain, frontal lobe, hippocampus, and lung, very low expression in cerebellum, medulla oblongata, temporal lobe, testis, kidney and appendix.

It is found in the cytoplasm. Its function is as follows. Atypical sulfotransferase family member with very low affinity for 3'-phospho-5'-adenylyl sulfate (PAPS) and very low catalytic activity towards L-triiodothyronine, thyroxine, estrone, p-nitrophenol, 2-naphthylamine, and 2-beta-naphthol. May have a role in the metabolism of drugs and neurotransmitters in the CNS. In Homo sapiens (Human), this protein is Sulfotransferase 4A1 (SULT4A1).